The sequence spans 872 residues: Coatomer subunit gamma-2 (872 aa).

HEAT repeat units lie at residues 64–101 (MEAT…ISED), 283–320 (RELA…KHPS), 321–355 (AVTA…GSES), 356–392 (SVDR…KYPR), 395–430 (SVMM…ENPD), and 467–504 (PTPS…QNEP).

Belongs to the COPG family. Oligomeric complex.

It is found in the cytoplasm. The protein resides in the golgi apparatus membrane. It localises to the cytoplasmic vesicle. The protein localises to the COPI-coated vesicle membrane. Its function is as follows. The coatomer is a cytosolic protein complex that binds to dilysine motifs and reversibly associates with Golgi non-clathrin-coated vesicles, which further mediate biosynthetic protein transport from the ER, via the Golgi up to the trans Golgi network. Coatomer complex is required for budding from Golgi membranes, and is essential for the retrograde Golgi-to-ER transport of dilysine-tagged proteins. The polypeptide is Coatomer subunit gamma-2 (copg2) (Xenopus tropicalis (Western clawed frog)).